The following is a 315-amino-acid chain: Transaldolase (315 aa).

Lys-128 serves as the catalytic Schiff-base intermediate with substrate.

Belongs to the transaldolase family. Type 1 subfamily. As to quaternary structure, homodimer.

The protein localises to the cytoplasm. The enzyme catalyses D-sedoheptulose 7-phosphate + D-glyceraldehyde 3-phosphate = D-erythrose 4-phosphate + beta-D-fructose 6-phosphate. The protein operates within carbohydrate degradation; pentose phosphate pathway; D-glyceraldehyde 3-phosphate and beta-D-fructose 6-phosphate from D-ribose 5-phosphate and D-xylulose 5-phosphate (non-oxidative stage): step 2/3. Transaldolase is important for the balance of metabolites in the pentose-phosphate pathway. In Opitutus terrae (strain DSM 11246 / JCM 15787 / PB90-1), this protein is Transaldolase.